Reading from the N-terminus, the 362-residue chain is 5-amino-6-(D-ribitylamino)uracil--L-tyrosine 4-hydroxyphenyl transferase (362 aa).

The 247-residue stretch at 48–294 (ITYVVNRNIN…GDTIKNIQVS (247 aa)) folds into the Radical SAM core domain. Residues C62, C66, and C69 each contribute to the [4Fe-4S] cluster site.

Belongs to the radical SAM superfamily. CofH family. As to quaternary structure, consists of two subunits, CofG and CofH. [4Fe-4S] cluster is required as a cofactor.

It carries out the reaction 5-amino-6-(D-ribitylamino)uracil + L-tyrosine + S-adenosyl-L-methionine = 5-amino-5-(4-hydroxybenzyl)-6-(D-ribitylimino)-5,6-dihydrouracil + 2-iminoacetate + 5'-deoxyadenosine + L-methionine + H(+). Its pathway is cofactor biosynthesis; coenzyme F0 biosynthesis. Its function is as follows. Catalyzes the radical-mediated synthesis of 5-amino-5-(4-hydroxybenzyl)-6-(D-ribitylimino)-5,6-dihydrouracil from 5-amino-6-(D-ribitylamino)uracil and L-tyrosine. This Methanococcus aeolicus (strain ATCC BAA-1280 / DSM 17508 / OCM 812 / Nankai-3) protein is 5-amino-6-(D-ribitylamino)uracil--L-tyrosine 4-hydroxyphenyl transferase.